The chain runs to 691 residues: L-type lectin-domain containing receptor kinase S.6 (691 aa).

An N-terminal signal peptide occupies residues 1–25 (MNHHHYSLVIFHLILFLSLDFPTLS). Residues 26–311 (HRFSPPLQNL…VVGLKIPVWS (286 aa)) lie on the Extracellular side of the membrane. A legume-lectin like region spans residues 27–257 (RFSPPLQNLT…LHIVERWKFR (231 aa)). Residues Asn34 and Asn89 are each glycosylated (N-linked (GlcNAc...) asparagine). A helical membrane pass occupies residues 312-332 (LLPGLAAIVILVAFIVFSLIC). Residues 333 to 691 (GKKRISEEAD…PWMTPKSHFS (359 aa)) are Cytoplasmic-facing. Residues 366–653 (FNENAIVGQG…IRGEAPLPVL (288 aa)) enclose the Protein kinase domain. ATP-binding positions include 372-380 (VGQGASATV) and Lys394. The active-site Proton acceptor is the Asp500.

It in the C-terminal section; belongs to the protein kinase superfamily. Ser/Thr protein kinase family. In the N-terminal section; belongs to the leguminous lectin family.

Its subcellular location is the cell membrane. It carries out the reaction L-seryl-[protein] + ATP = O-phospho-L-seryl-[protein] + ADP + H(+). It catalyses the reaction L-threonyl-[protein] + ATP = O-phospho-L-threonyl-[protein] + ADP + H(+). Functionally, involved in resistance response to the pathogenic oomycetes Phytophthora infestans and Phytophthora capsici and to the pathogenic bacteria Pseudomonas syringae. This chain is L-type lectin-domain containing receptor kinase S.6, found in Arabidopsis thaliana (Mouse-ear cress).